The following is a 324-amino-acid chain: Putative divalent cation/proton antiporter TMEM165 (324 aa).

The signal sequence occupies residues methionine 1 to alanine 33. At glycine 34–threonine 89 the chain is on the lumenal side. Positions proline 35–glutamate 45 are enriched in basic and acidic residues. Residues proline 35–alanine 59 are disordered. The span at alanine 50–alanine 59 shows a compositional bias: low complexity. Residues asparagine 90–glycine 110 traverse the membrane as a helical segment. Residues aspartate 111–arginine 126 lie on the Cytoplasmic side of the membrane. The helical transmembrane segment at leucine 127 to phenylalanine 147 threads the bilayer. Residues glycine 148–threonine 151 are Lumenal-facing. Residues threonine 152–isoleucine 172 form a helical membrane-spanning segment. The Cytoplasmic portion of the chain corresponds to arginine 173 to lysine 228. Positions aspartate 184 to asparagine 211 form a coiled coil. A helical transmembrane segment spans residues tryptophan 229–tryptophan 249. Topologically, residues glycine 250–tyrosine 267 are lumenal. A helical transmembrane segment spans residues glycine 268–glycine 288. The Cytoplasmic segment spans residues arginine 289–threonine 299. Residues valine 300–proline 320 traverse the membrane as a helical segment. Topologically, residues aspartate 321 to phenylalanine 324 are lumenal.

It belongs to the GDT1 family. In terms of tissue distribution, ubiquitously expressed.

It is found in the golgi apparatus membrane. The enzyme catalyses Ca(2+)(in) + n H(+)(out) = Ca(2+)(out) + n H(+)(in). The catalysed reaction is Mn(2+)(in) + n H(+)(out) = Mn(2+)(out) + n H(+)(in). Its function is as follows. Putative divalent cation:proton antiporter that exchanges calcium or manganese ions for protons across the Golgi membrane. Mediates the reversible transport of calcium or manganese to the Golgi lumen driven by the proton gradient and possibly the membrane potential generated by V-ATPase. Provides calcium or manganese cofactors to resident Golgi enzymes and contributes to the maintenance of an acidic luminal Golgi pH required for proper functioning of the secretory pathway. Promotes Ca(2+) storage within the Golgi lumen of the mammary epithelial cells to be then secreted into milk. The transport mechanism and stoichiometry remains to be elucidated. This is Putative divalent cation/proton antiporter TMEM165 from Homo sapiens (Human).